Reading from the N-terminus, the 242-residue chain is Phosducin-like protein 2 (242 aa).

The 168-residue stretch at Val-34–Ala-201 folds into the Phosducin domain. Positions Phe-89 to Lys-242 are thioredoxin fold.

It belongs to the phosducin family. Interacts with the CCT chaperonin complex and actin.

It localises to the endoplasmic reticulum. Essential for male fertility, spermiogenesis and acrosome formation. The polypeptide is Phosducin-like protein 2 (PDCL2) (Bos taurus (Bovine)).